A 223-amino-acid chain; its full sequence is Cuticular glutathione peroxidase (223 aa).

The signal sequence occupies residues 1 to 19 (MSAQLLILSHVVLLQLIVA). An N-linked (GlcNAc...) asparagine glycan is attached at Asn39. Residue Cys74 is part of the active site. Asn92 carries N-linked (GlcNAc...) asparagine glycosylation.

It belongs to the glutathione peroxidase family. In terms of assembly, homotetramer.

The protein localises to the secreted. The catalysed reaction is 2 glutathione + H2O2 = glutathione disulfide + 2 H2O. In terms of biological role, could inhibit the oxidative burst of leukocytes and neutralize the secondary products of lipid peroxidation, thus providing the resistance of these parasites to immune effector mechanisms and their persistence in the mammalian host. It may also be involved in the formation of cross-linking residues such as dityrosine, trityrosine and isotrityrosine identified in cuticular collagen. Highly cross-linked external cortex may also serve to protect the parasite from immune attack. The protein is Cuticular glutathione peroxidase of Wuchereria bancrofti.